Consider the following 36-residue polypeptide: Photosystem II reaction center protein M (36 aa).

Residues 5 to 25 (ILAFIATALFILVPTAFLLII) traverse the membrane as a helical segment.

Belongs to the PsbM family. As to quaternary structure, PSII is composed of 1 copy each of membrane proteins PsbA, PsbB, PsbC, PsbD, PsbE, PsbF, PsbH, PsbI, PsbJ, PsbK, PsbL, PsbM, PsbT, PsbX, PsbY, PsbZ, Psb30/Ycf12, at least 3 peripheral proteins of the oxygen-evolving complex and a large number of cofactors. It forms dimeric complexes.

The protein resides in the plastid. Its subcellular location is the chloroplast thylakoid membrane. One of the components of the core complex of photosystem II (PSII). PSII is a light-driven water:plastoquinone oxidoreductase that uses light energy to abstract electrons from H(2)O, generating O(2) and a proton gradient subsequently used for ATP formation. It consists of a core antenna complex that captures photons, and an electron transfer chain that converts photonic excitation into a charge separation. This subunit is found at the monomer-monomer interface. This chain is Photosystem II reaction center protein M, found in Panax ginseng (Korean ginseng).